A 154-amino-acid chain; its full sequence is Insulin-like peptide 1 (154 aa).

A signal peptide spans 1–29; it reads MFSQHNGAAVHGLRLQSLLIAAMLTAAMA. Intrachain disulfides connect cysteine 49–cysteine 138, cysteine 61–cysteine 151, and cysteine 137–cysteine 142. Positions 72–92 are disordered; sequence RESLLGNSDDDEDTEQEVQDD. Positions 73 to 122 are cleaved as a propeptide — connecting peptide; that stretch reads ESLLGNSDDDEDTEQEVQDDSSMWQTLDGAGYSFSPLLTNLYGSEVLIKM. Residues 79–91 are compositionally biased toward acidic residues; that stretch reads SDDDEDTEQEVQD.

It belongs to the insulin family. Heterodimer of a B chain and an A chain linked by two disulfide bonds.

The protein resides in the secreted. Possible ligand of InR/insulin-like receptor. The protein is Insulin-like peptide 1 of Drosophila melanogaster (Fruit fly).